The sequence spans 185 residues: NAD(P)H-dependent FMN reductase PA1204 (185 aa).

Residues 13–20 (SLRSGSYN) and 81–83 (YNY) contribute to the FMN site. Position 115–122 (115–122 (SAGRFGTA)) interacts with NAD(+).

It belongs to the SsuE family. In terms of assembly, homodimer. FMN serves as cofactor.

Its function is as follows. Has NAD(P)H-dependent FMN reductase activity. The protein is NAD(P)H-dependent FMN reductase PA1204 of Pseudomonas aeruginosa (strain ATCC 15692 / DSM 22644 / CIP 104116 / JCM 14847 / LMG 12228 / 1C / PRS 101 / PAO1).